We begin with the raw amino-acid sequence, 164 residues long: Putative pre-16S rRNA nuclease (164 aa).

It belongs to the YqgF nuclease family.

Its subcellular location is the cytoplasm. In terms of biological role, could be a nuclease involved in processing of the 5'-end of pre-16S rRNA. This is Putative pre-16S rRNA nuclease from Synechococcus sp. (strain CC9902).